A 363-amino-acid chain; its full sequence is Carbamoyl phosphate synthase small chain (363 aa).

CPSase regions lie at residues 1–168 (MTKR…ASPG) and 1–172 (MTKR…DGKR). L-glutamine-binding residues include serine 46, glycine 220, and glycine 222. The Glutamine amidotransferase type-1 domain occupies 172 to 359 (RVVLVDYGVK…MEMMNVKEEG (188 aa)). Cysteine 247 functions as the Nucleophile in the catalytic mechanism. Residues leucine 248, glutamine 251, asparagine 289, glycine 291, and tyrosine 292 each contribute to the L-glutamine site. Catalysis depends on residues histidine 332 and glutamate 334.

Belongs to the CarA family. As to quaternary structure, composed of two chains; the small (or glutamine) chain promotes the hydrolysis of glutamine to ammonia, which is used by the large (or ammonia) chain to synthesize carbamoyl phosphate. Tetramer of heterodimers (alpha,beta)4.

It catalyses the reaction hydrogencarbonate + L-glutamine + 2 ATP + H2O = carbamoyl phosphate + L-glutamate + 2 ADP + phosphate + 2 H(+). The enzyme catalyses L-glutamine + H2O = L-glutamate + NH4(+). The protein operates within amino-acid biosynthesis; L-arginine biosynthesis; carbamoyl phosphate from bicarbonate: step 1/1. It participates in pyrimidine metabolism; UMP biosynthesis via de novo pathway; (S)-dihydroorotate from bicarbonate: step 1/3. Functionally, small subunit of the glutamine-dependent carbamoyl phosphate synthetase (CPSase). CPSase catalyzes the formation of carbamoyl phosphate from the ammonia moiety of glutamine, carbonate, and phosphate donated by ATP, constituting the first step of 2 biosynthetic pathways, one leading to arginine and/or urea and the other to pyrimidine nucleotides. The small subunit (glutamine amidotransferase) binds and cleaves glutamine to supply the large subunit with the substrate ammonia. This chain is Carbamoyl phosphate synthase small chain, found in Listeria innocua serovar 6a (strain ATCC BAA-680 / CLIP 11262).